We begin with the raw amino-acid sequence, 318 residues long: Transcriptional regulator NovG (318 aa).

Polar residues predominate over residues 146–156 (VASLRSSSTAG). A disordered region spans residues 146-176 (VASLRSSSTAGTVGRRTGQDGRSRPNDGTDG). The segment covering 162 to 176 (TGQDGRSRPNDGTDG) has biased composition (basic and acidic residues).

The protein belongs to the ParB family.

Functionally, transcription regulator that specifically activates expression of genes involved in the novobiocin biosynthesis pathway. Binds 5'-GTTCRACTG(N)(11)CRGTYGAAC-3' DNA sequence. This chain is Transcriptional regulator NovG (novG), found in Streptomyces niveus (Streptomyces spheroides).